Here is a 320-residue protein sequence, read N- to C-terminus: Aspartate carbamoyltransferase catalytic subunit (320 aa).

Arg68 and Thr69 together coordinate carbamoyl phosphate. Residue Lys96 participates in L-aspartate binding. Carbamoyl phosphate-binding residues include Arg118, His148, and Gln151. Residues Arg181 and Arg236 each coordinate L-aspartate. Carbamoyl phosphate-binding residues include Gly277 and Pro278.

Belongs to the aspartate/ornithine carbamoyltransferase superfamily. ATCase family. In terms of assembly, heterododecamer (2C3:3R2) of six catalytic PyrB chains organized as two trimers (C3), and six regulatory PyrI chains organized as three dimers (R2).

The catalysed reaction is carbamoyl phosphate + L-aspartate = N-carbamoyl-L-aspartate + phosphate + H(+). It participates in pyrimidine metabolism; UMP biosynthesis via de novo pathway; (S)-dihydroorotate from bicarbonate: step 2/3. In terms of biological role, catalyzes the condensation of carbamoyl phosphate and aspartate to form carbamoyl aspartate and inorganic phosphate, the committed step in the de novo pyrimidine nucleotide biosynthesis pathway. This is Aspartate carbamoyltransferase catalytic subunit from Acidovorax ebreus (strain TPSY) (Diaphorobacter sp. (strain TPSY)).